The sequence spans 1380 residues: Protein TORNADO 1 (1380 aa).

LRR repeat units lie at residues 26–46 (FFNLQTLSFSSSGNTTHCQLI), 47–70 (TESSMNINVTRDNLTSLSQIFIEL), 105–132 (TSKIKQLAFRKNRFSEQCLNELSEILKR), 161–184 (NDSLEELQIWEDSIGSKGAEELSR), 266–289 (NTTVRSLDMTGAKLNSRWAKEFRW), 299–322 (EVKLSKTGLKDKAVVYIAAGLFKN), 323–346 (KSLQSLYVDGNRFGSVGVEDLLCP), 348–371 (SRFSALQLQANITLRSIVFGGSNT), 446–472 (INPLIEEIDLARTPLQDSGKADEIYQK), and 476–502 (NGRKIDEAETDDSLKDMPLTEPKSVRA). Positions 493-702 (PLTEPKSVRA…HHIRMTSKAI (210 aa)) constitute a Roc domain. GTP-binding positions include 506–513 (GQNYAGKT) and 567–571 (NLAGQ). Residues 574–594 (FFALHDLMFPSPCFFLIVLSL) form a helical membrane-spanning segment. LRR repeat units lie at residues 640 to 665 (LTHSEKINLQSESFQATVGCIQRLRD), 688 to 712 (VSKLTHHIRMTSKAILQRVPRVYQL), 799 to 826 (LTQLIKLDVRKQSTGERNGFVSRKELEK), 1023 to 1046 (QSQFVSLHRLKEALSSVPAETMYD), 1131 to 1154 (EAVLQRLKIIEQEIRDLKQEIQGL), and 1229 to 1254 (QLGCDVMQIDNQAVKCLAPYMTNFMK). Position 641–644 (641–644 (THSE)) interacts with GTP. Residues 757-931 (NIQIVETRRH…LQVHLHNRIM (175 aa)) form the COR domain. 2 helical membrane-spanning segments follow: residues 1255–1275 (LVTFALRIGANWAAGMGHMIP) and 1287–1307 (PAVMTGAAGAAGAIGVAAALG).

In terms of tissue distribution, expressed in seedlings, roots, leaves, stems and flowers. Present in ovules, prominently in nucellus and integuments.

It localises to the membrane. Functionally, involved in the basipetal transport of auxin (IAA) that modulates growth and organs organization. Required for initial divisions in the epidermal/lateral root cap leading to the formation of epidermal cells and a clone of lateral root cap cells, as well as for the maintenance of the radial pattern of cell specification in the root, thus regulating the distinction between the lateral root cap and epidermis. This is Protein TORNADO 1 (TRN1) from Arabidopsis thaliana (Mouse-ear cress).